The primary structure comprises 480 residues: MKKLLFVLLTITLLASCQKVSVEQTKVIPEPIKKTTLNVGTLYGAQIFVTTGQGEAGFDFEMASRFAEYLKLELKMKPYSNISELYQALESGEVDLLAAGLADTPTRREKFRLGPPLYRVNQVLVYKQGTPIPKDVSTLEDNITVITDSSFVETLSQLQKLYPELVWEQEKEKDSEELMAMIARGEITYTIADSSTFEINRRYLPELRAGPILKEKQAIVWLLPPKNSDQLMSDLLTFWHYEKRSGTLAHLNEKYFAHVKRFDYVDTRAFLRAIDNKLPKYKESFQHYANGIDWRKLAATAYQESHWNPNARSPTGVRGLMMLTLPTAKQVGIKNRLDPIQSIKGGAKYLNDILNRLPDSIPENQRMWFALASYNIGYGHVEDARKLAQSMGLNPSAWRDLKEVLPLLHKRKYYQRTRYGYARGNEAVHYVDSIRRYYDTLVWVDNQNQLLIDEKASAEESQLAEKIGGKQENLSGAQPQ.

A signal peptide spans 1–15 (MKKLLFVLLTITLLA). Residues 16-259 (SCQKVSVEQT…HLNEKYFAHV (244 aa)) form a non-LT domain region. Residues 260-480 (KRFDYVDTRA…QENLSGAQPQ (221 aa)) form an LT domain region. Glutamate 304 is a catalytic residue.

In the N-terminal section; belongs to the bacterial solute-binding protein 3 family. This sequence in the C-terminal section; belongs to the transglycosylase Slt family.

It localises to the cell outer membrane. The enzyme catalyses Exolytic cleavage of the (1-&gt;4)-beta-glycosidic linkage between N-acetylmuramic acid (MurNAc) and N-acetylglucosamine (GlcNAc) residues in peptidoglycan, from either the reducing or the non-reducing ends of the peptidoglycan chains, with concomitant formation of a 1,6-anhydrobond in the MurNAc residue.. Murein-degrading enzyme that degrades murein glycan strands and insoluble, high-molecular weight murein sacculi, with the concomitant formation of a 1,6-anhydromuramoyl product. Lytic transglycosylases (LTs) play an integral role in the metabolism of the peptidoglycan (PG) sacculus. Their lytic action creates space within the PG sacculus to allow for its expansion as well as for the insertion of various structures such as secretion systems and flagella. In Shewanella sediminis (strain HAW-EB3), this protein is Membrane-bound lytic murein transglycosylase F.